A 444-amino-acid polypeptide reads, in one-letter code: Serine carboxypeptidase-like 50 (444 aa).

Positions 1–22 (MEQATTLFILLSTLLLAVSVES) are cleaved as a signal peptide. Cys-79 and Cys-308 are disulfide-bonded. The active site involves Ser-170. Asn-263 carries an N-linked (GlcNAc...) asparagine glycan. Asp-345 is an active-site residue. Asn-361 carries an N-linked (GlcNAc...) asparagine glycan. Residue His-403 is part of the active site.

It belongs to the peptidase S10 family. Ubiquitous.

The protein localises to the secreted. Probable carboxypeptidase. The chain is Serine carboxypeptidase-like 50 (SCPL50) from Arabidopsis thaliana (Mouse-ear cress).